We begin with the raw amino-acid sequence, 157 residues long: SUMO-conjugating enzyme UBC9-B (157 aa).

The 154-residue stretch at 4–157 (IALSRLAQER…VRAQAKKFSP (154 aa)) folds into the UBC core domain. Positions 13–18 (RKAWRK) are interaction with SUMO1. The active-site Glycyl thioester intermediate is the Cys-93.

This sequence belongs to the ubiquitin-conjugating enzyme family. In terms of assembly, forms a tight complex with rangap1 and ranbp2. Interacts with vsx1.

It is found in the nucleus. It participates in protein modification; protein sumoylation. Functionally, accepts the ubiquitin-like proteins sumo1, sumo2 and sumo3 from the uble1a-uble1b E1 complex and catalyzes their covalent attachment to other proteins with the help of an E3 ligase such as ranbp2 or cbx4. Essential for nuclear architecture and chromosome segregation. Mediates nuclear localization of vsx1. Required for progression through mitosis during organogenesis. This chain is SUMO-conjugating enzyme UBC9-B (ube2ib), found in Danio rerio (Zebrafish).